A 147-amino-acid polypeptide reads, in one-letter code: uncharacterized protein (147 aa).

The HTH LytTR-type domain maps to L44–I147.

It localises to the cytoplasm. This is an uncharacterized protein from Staphylococcus aureus (strain bovine RF122 / ET3-1).